Here is a 766-residue protein sequence, read N- to C-terminus: Hypoxia-inducible factor 1-alpha (766 aa).

The disordered stretch occupies residues 1-26 (MDTGVVPEKKSRVSSDRRKEKSRDAA). The span at 7-26 (PEKKSRVSSDRRKEKSRDAA) shows a compositional bias: basic and acidic residues. Residues 17–70 (RRKEKSRDAARCRRGKESEVFYELAQELPLPHSVTSNLDKASIMRLAISYLHMR) enclose the bHLH domain. PAS domains are found at residues 82 to 159 (EERE…TSKK) and 230 to 300 (PHPS…FAKG). Residues 304 to 347 (TGQYRMLAKRGGFVWVETQATVIYNNKNSQPQCVVCVNYVLSGI) enclose the PAC domain. Residues 361–383 (DMRPVKKELEEEESSEPEVSPVL) form a disordered region. Residue P426 is modified to 4-hydroxyproline. The tract at residues 475–509 (DQHLVPNTSVDTTEVSTGPDSSSTPGSHSFTEPDS) is disordered. The segment covering 479–489 (VPNTSVDTTEV) has biased composition (polar residues). Low complexity predominate over residues 490–503 (STGPDSSSTPGSHS). P559 is subject to 4-hydroxyproline. Residues 718 to 721 (LLGI) carry the Nuclear localization signal motif. N743 is modified ((3S)-3-hydroxyasparagine).

As to quaternary structure, efficient DNA binding requires heterodimerization of an alpha and a beta/ARNT subunit. In normoxia, is hydroxylated on Pro-426 and Pro-559. The hydroxylated prolines promote interaction with VHL, initiating rapid ubiquitination and subsequent proteasomal degradation. Under hypoxia, proline hydroxylation is impaired and ubiquitination is attenuated, resulting in stabilization. In terms of processing, in normoxia, is hydroxylated on Asn-743, thus abrogating interaction with CREBBP and EP300 and preventing transcriptional activation. Post-translationally, the iron and 2-oxoglutarate dependent 3-hydroxylation of asparagine is (S) stereospecific within HIF CTAD domains.

It localises to the cytoplasm. The protein localises to the nucleus. It is found in the nucleus speckle. Its activity is regulated as follows. Induced by reactive oxygen species (ROS). Functionally, functions as a master transcriptional regulator of the adaptive response to hypoxia. Under hypoxic conditions, activates the transcription of over 40 genes, including erythropoietin, glucose transporters, glycolytic enzymes, vascular endothelial growth factor, HILPDA, and other genes whose protein products increase oxygen delivery or facilitate metabolic adaptation to hypoxia. Plays an essential role in embryonic vascularization, tumor angiogenesis and pathophysiology of ischemic disease. The polypeptide is Hypoxia-inducible factor 1-alpha (hif1a) (Oncorhynchus mykiss (Rainbow trout)).